The primary structure comprises 301 residues: Oxaloacetate tautomerase YisK (301 aa).

Lys99 contacts oxalate. The Mn(2+) site is built by Glu148, Glu150, and Asp179. Oxalate is bound by residues Lys196 and Thr266.

It belongs to the FAH family. In terms of assembly, homodimer. It depends on Mg(2+) as a cofactor. Mn(2+) serves as cofactor.

The protein localises to the cytoplasm. The catalysed reaction is oxaloacetate = enol-oxaloacetate. It catalyses the reaction oxaloacetate + H(+) = pyruvate + CO2. Functionally, tautomerase that converts enol-oxaloacetate to the keto form of oxaloacetate. Also shows weak oxaloacetate decarboxylase (ODx), catalyzing the decarboxylation of oxaloacetate (OAA) to pyruvate and CO(2). The chain is Oxaloacetate tautomerase YisK from Bacillus subtilis (strain 168).